Reading from the N-terminus, the 119-residue chain is MKKAYRVKSDKDFQAIFTEGRSVANRKFVVYSLEKDQSHYRVGLSVGKRLGNAVVRNAIKRKLRHVLMELGPYLGTQDFVVIARKGVEELDYSTMKKNLVHVLKLAKLYQEGSIREKEI.

This sequence belongs to the RnpA family. Consists of a catalytic RNA component (M1 or rnpB) and a protein subunit.

It catalyses the reaction Endonucleolytic cleavage of RNA, removing 5'-extranucleotides from tRNA precursor.. Its function is as follows. RNaseP catalyzes the removal of the 5'-leader sequence from pre-tRNA to produce the mature 5'-terminus. It can also cleave other RNA substrates such as 4.5S RNA. The protein component plays an auxiliary but essential role in vivo by binding to the 5'-leader sequence and broadening the substrate specificity of the ribozyme. The sequence is that of Ribonuclease P protein component from Streptococcus mutans serotype c (strain ATCC 700610 / UA159).